The sequence spans 142 residues: Nucleoside diphosphate kinase (142 aa).

6 residues coordinate ATP: Lys11, Phe59, Arg87, Thr93, Arg104, and Asn114. His117 acts as the Pros-phosphohistidine intermediate in catalysis.

The protein belongs to the NDK family. In terms of assembly, homotetramer. Mg(2+) serves as cofactor.

The protein resides in the cytoplasm. The enzyme catalyses a 2'-deoxyribonucleoside 5'-diphosphate + ATP = a 2'-deoxyribonucleoside 5'-triphosphate + ADP. The catalysed reaction is a ribonucleoside 5'-diphosphate + ATP = a ribonucleoside 5'-triphosphate + ADP. Its function is as follows. Major role in the synthesis of nucleoside triphosphates other than ATP. The ATP gamma phosphate is transferred to the NDP beta phosphate via a ping-pong mechanism, using a phosphorylated active-site intermediate. This is Nucleoside diphosphate kinase from Marinobacter nauticus (strain ATCC 700491 / DSM 11845 / VT8) (Marinobacter aquaeolei).